A 421-amino-acid polypeptide reads, in one-letter code: Putative hydro-lyase KRH_21160 (421 aa).

Disordered regions lie at residues 200–298 (TWGH…SPVT) and 312–421 (TRAG…AVSR). Residues 224-237 (GSRRRPRWWSRLRR) show a composition bias toward basic residues. Low complexity-rich tracts occupy residues 243–260 (PRATCSSPTPGTPTTRCP) and 370–380 (SRGPGPCPRAA).

Belongs to the D-glutamate cyclase family.

The protein is Putative hydro-lyase KRH_21160 of Kocuria rhizophila (strain ATCC 9341 / DSM 348 / NBRC 103217 / DC2201).